Consider the following 237-residue polypeptide: Probable GTP-binding protein EngB (237 aa).

Positions threonine 13 to tyrosine 188 constitute an EngB-type G domain. GTP-binding positions include glycine 21–serine 28, glycine 48–methionine 52, aspartate 67–glycine 70, threonine 134–aspartate 137, and phenylalanine 167–serine 169. Positions 28 and 50 each coordinate Mg(2+). The segment covering aspartate 207–serine 220 has biased composition (acidic residues). Positions aspartate 207–isoleucine 237 are disordered. Over residues isoleucine 227 to isoleucine 237 the composition is skewed to basic and acidic residues.

It belongs to the TRAFAC class TrmE-Era-EngA-EngB-Septin-like GTPase superfamily. EngB GTPase family. Mg(2+) serves as cofactor.

Its function is as follows. Necessary for normal cell division and for the maintenance of normal septation. In Acinetobacter baylyi (strain ATCC 33305 / BD413 / ADP1), this protein is Probable GTP-binding protein EngB.